Consider the following 456-residue polypeptide: MALPVVAIIGRPNVGKSTLVNRLCQSREAIVHDEPGVTRDRTYQDGFWRDRDFKVVDTGGLVFDDDSEFLPEIREQANLALEEAVVALVIVDGQEGITTADESIAEFLRSRSGKTLVVVNKCESPEQGLAMAAQFWKLGLGEPYPISAIHGVGTGDLLDQVVNLFPSKDLDEVSDSPVQLAIIGRPNVGKSSLLNSICGETRAIVSSIRGTTRDTIDTRITHQGKEWKLVDTAGIRRRRSVNYGPEFFGINRSFKAIERSDVCVLVIDALDGVTEQDQRLAGRIEQEGRACLIVINKWDAVEKDSHTMSAMEKDIRSKLYFLDWAQMIFTSAVTGQRVEGIFALATLAVDQSRRRVTTSVVNEVLTEALKWRSPPTTRGGKQGRLYYGTQVAINPPSFTLFVNEPKLFGETYRRYIERQIREGLGFEGTPIKLFWRGKQQRDVEKDMARQQKGVRN.

2 consecutive EngA-type G domains span residues 4-169 (PVVA…PSKD) and 178-353 (VQLA…DQSR). Residues 10 to 17 (GRPNVGKS), 57 to 61 (DTGGL), 120 to 123 (NKCE), 184 to 191 (GRPNVGKS), 231 to 235 (DTAGI), and 296 to 299 (NKWD) contribute to the GTP site. The KH-like domain maps to 354-439 (RRVTTSVVNE…PIKLFWRGKQ (86 aa)).

The protein belongs to the TRAFAC class TrmE-Era-EngA-EngB-Septin-like GTPase superfamily. EngA (Der) GTPase family. Associates with the 50S ribosomal subunit.

GTPase that plays an essential role in the late steps of ribosome biogenesis. The sequence is that of GTPase Der from Prochlorococcus marinus (strain NATL2A).